The primary structure comprises 102 residues: Large ribosomal subunit protein bL21 (102 aa).

This sequence belongs to the bacterial ribosomal protein bL21 family. As to quaternary structure, part of the 50S ribosomal subunit. Contacts protein L20.

Its function is as follows. This protein binds to 23S rRNA in the presence of protein L20. This chain is Large ribosomal subunit protein bL21, found in Agathobacter rectalis (strain ATCC 33656 / DSM 3377 / JCM 17463 / KCTC 5835 / VPI 0990) (Eubacterium rectale).